A 222-amino-acid polypeptide reads, in one-letter code: Ras-related protein Rab-41 (222 aa).

Residues S41, V42, G43, K44, T45, S46, and T63 each coordinate GTP. Mg(2+) is bound at residue T45. Residues 58–66 are switch-I; it reads CACQATVGI. 2 residues coordinate Mg(2+): T63 and D86. G89, N144, K145, D147, S174, A175, and K176 together coordinate GTP. The interval 89 to 105 is switch-II; that stretch reads GQERFHSLIPSYIRDST. C222 carries the S-geranylgeranyl cysteine lipid modification.

The protein belongs to the small GTPase superfamily. Rab family. The cofactor is Mg(2+). In terms of tissue distribution, widely expressed in brain, testis, lung, heart, ovary, colon, kidney, uterus and spleen but not in liver.

The protein localises to the cytoplasm. The enzyme catalyses GTP + H2O = GDP + phosphate + H(+). Its activity is regulated as follows. Regulated by guanine nucleotide exchange factors (GEFs) which promote the exchange of bound GDP for free GTP. Regulated by GTPase activating proteins (GAPs) which increase the GTP hydrolysis activity. Inhibited by GDP dissociation inhibitors (GDIs). In terms of biological role, the small GTPases Rab are key regulators of intracellular membrane trafficking, from the formation of transport vesicles to their fusion with membranes. Rabs cycle between an inactive GDP-bound form and an active GTP-bound form that is able to recruit to membranes different sets of downstream effectors directly responsible for vesicle formation, movement, tethering and fusion. RAB41 is required for normal Golgi ribbon organization and ER-to-Golgi trafficking. The polypeptide is Ras-related protein Rab-41 (Homo sapiens (Human)).